The chain runs to 316 residues: MEQNILNSILDKFGDGDQERSDIRHNDSGDENDNHSDHEGNHGNNECCEGNEDGDKEYEVDVEDMTDEQYAQFIQEQQEPKIKSGGNTGVKGVLSDYAEHREKQKQKYLQKKYETQKMLEKMCFTTRDQPPPTEEENQLDSDDDDLERIRKARMEQWKSKQQITSDVKKPEKKVFGYFKQIDSSQYIHEIDNEPPNVFVIIHLFQNYIPECVLLNQQLGQLAVKYRYIKFLKILSKEAKENYHDEALPSLLVYIGGKLLVSFVPLTEELGRNFDQEDLELLLSSYDIIPNPMKAKNSNWETSLSRKRPESDDDNDD.

Residues 1-61 (MEQNILNSIL…EDGDKEYEVD (61 aa)) form a disordered region. Positions 12-41 (KFGDGDQERSDIRHNDSGDENDNHSDHEGN) are enriched in basic and acidic residues. Residues 49–61 (EGNEDGDKEYEVD) are compositionally biased toward acidic residues. The 196-residue stretch at 95–290 (SDYAEHREKQ…LLSSYDIIPN (196 aa)) folds into the Phosducin domain. Residues 102–156 (EKQKQKYLQKKYETQKMLEKMCFTTRDQPPPTEEENQLDSDDDDLERIRKARMEQ) are a coiled coil. Positions 175-316 (FGYFKQIDSS…RPESDDDNDD (142 aa)) are thioredoxin fold. A disordered region spans residues 293–316 (KAKNSNWETSLSRKRPESDDDNDD).

This sequence belongs to the phosducin family.

The protein localises to the cytoplasm. In terms of biological role, required for normal chemotaxis in response to cAMP and folate. Required for the heterodimerization of the G protein beta and gamma subunits gpbA and gpgA, which is itself thought to be necessary for prenylation of the gamma subunit gpgA and its association with plasma membranes. In Dictyostelium discoideum (Social amoeba), this protein is Phosducin-like protein 1 (phlp1).